The following is a 499-amino-acid chain: Glucose-6-phosphate isomerase (499 aa).

Glu-352 (proton donor) is an active-site residue. Residues His-383 and Lys-487 contribute to the active site.

It belongs to the GPI family.

It localises to the cytoplasm. The enzyme catalyses alpha-D-glucose 6-phosphate = beta-D-fructose 6-phosphate. It participates in carbohydrate biosynthesis; gluconeogenesis. Its pathway is carbohydrate degradation; glycolysis; D-glyceraldehyde 3-phosphate and glycerone phosphate from D-glucose: step 2/4. Functionally, catalyzes the reversible isomerization of glucose-6-phosphate to fructose-6-phosphate. This is Glucose-6-phosphate isomerase from Legionella pneumophila (strain Paris).